The following is a 1969-amino-acid chain: TP53-binding protein 1 (1969 aa).

A disordered region spans residues Met1–Cys24. Polar residues predominate over residues Pro8 to Thr22. Phosphoserine is present on residues Ser30, Ser68, and Ser73. Residues Val67–Ser168 form a disordered region. A compositionally biased stretch (polar residues) spans Asn69 to Asn85. Positions Glu86–Asp95 are enriched in basic and acidic residues. Positions His101–Gln110 are enriched in polar residues. Residue Ser109 is modified to Phosphoserine. Residues Pro135–Lys148 are compositionally biased toward acidic residues. Residues Ala158–Ser168 are compositionally biased toward low complexity. A phosphoserine mark is found at Ser169, Ser179, and Ser181. Lys220 is covalently cross-linked (Glycyl lysine isopeptide (Lys-Gly) (interchain with G-Cter in SUMO1); alternate). Lys220 is covalently cross-linked (Glycyl lysine isopeptide (Lys-Gly) (interchain with G-Cter in SUMO2); alternate). Disordered stretches follow at residues Glu254–Pro337, Leu352–Arg599, and Asp614–Ala707. Ser267 and Ser268 each carry phosphoserine. Positions Glu277–Leu288 are enriched in basic and acidic residues. The segment covering Val294–Pro324 has biased composition (polar residues). Position 297 is a phosphoserine (Ser297). Residue Thr305 is modified to Phosphothreonine. Ser368, Ser382, and Ser397 each carry phosphoserine. The segment covering Gln407–Lys419 has biased composition (basic and acidic residues). The span at Pro426–Val442 shows a compositional bias: polar residues. Phosphoserine occurs at positions 429, 452, and 464. Residues His481–Ser490 are compositionally biased toward polar residues. Basic and acidic residues predominate over residues Lys491 to Thr501. Phosphoserine is present on residues Ser507, Ser518, Ser523, and Ser525. Residues Leu517 to Met528 are compositionally biased toward polar residues. Phosphothreonine occurs at positions 543 and 548. Phosphoserine is present on residues Ser552 and Ser579. The segment covering Val566–Val582 has biased composition (polar residues). Residues Asp583–Arg599 are compositionally biased toward basic and acidic residues. The segment covering Asp614–Leu634 has biased composition (polar residues). 4 positions are modified to phosphoserine: Ser622, Ser627, Ser631, and Ser632. The span at Met640–Glu649 shows a compositional bias: basic and acidic residues. At Thr662 the chain carries Phosphothreonine. Basic and acidic residues predominate over residues Ser666–Pro675. Ser684, Ser716, Ser719, and Ser763 each carry phosphoserine. The tract at residues Lys754–Ala870 is disordered. A compositionally biased stretch (basic and acidic residues) spans Ala790–Val818. Ser822 carries the post-translational modification Phosphoserine. A compositionally biased stretch (basic and acidic residues) spans Val830–Gln839. Thr912 is subject to Phosphothreonine. Residue Lys920 forms a Glycyl lysine isopeptide (Lys-Gly) (interchain with G-Cter in SUMO2) linkage. The disordered stretch occupies residues Ser927–Ala1017. The segment covering Tyr935 to Ser949 has biased composition (polar residues). Residues Glu961–Leu975 are compositionally biased toward basic and acidic residues. A Phosphoserine modification is found at Ser965. A Glycyl lysine isopeptide (Lys-Gly) (interchain with G-Cter in SUMO2) cross-link involves residue Lys974. Ser1018 carries the post-translational modification Phosphoserine. 3 disordered regions span residues Gln1034–Pro1144, Gly1178–His1231, and Thr1267–Ser1478. The segment covering Glu1060 to Gln1074 has biased composition (basic and acidic residues). Phosphoserine is present on residues Ser1075 and Ser1096. The span at Ser1099–Glu1112 shows a compositional bias: low complexity. Ser1115 is modified (phosphoserine). Positions Gly1178–Arg1197 are enriched in polar residues. A Phosphothreonine modification is found at Thr1211. Phosphoserine is present on residues Ser1213 and Ser1216. The segment covering Glu1269–Thr1282 has biased composition (acidic residues). The span at Asp1295–Ser1326 shows a compositional bias: low complexity. A Phosphoserine modification is found at Ser1314. Arg1329 is subject to Omega-N-methylarginine. A Phosphoserine modification is found at Ser1339. Arg1352 carries the post-translational modification Omega-N-methylarginine. Ser1359 is modified (phosphoserine). A Glycyl lysine isopeptide (Lys-Gly) (interchain with G-Cter in SUMO2) cross-link involves residue Lys1362. Position 1365 is a phosphoserine (Ser1365). The GAR signature appears at Arg1393–Arg1400. Ser1423 and Ser1427 each carry phosphoserine. A Glycyl lysine isopeptide (Lys-Gly) (interchain with G-Cter in SUMO1); alternate cross-link involves residue Lys1431. Residue Lys1431 forms a Glycyl lysine isopeptide (Lys-Gly) (interchain with G-Cter in SUMO2); alternate linkage. Phosphoserine occurs at positions 1457, 1459, 1470, and 1471. Residues Gly1469–Ser1478 show a composition bias toward low complexity. Residues Asn1481–Gly1600 are tudor-like. An interaction with dimethylated histone H4 region spans residues Trp1492–Tyr1520. Lys1560 participates in a covalent cross-link: Glycyl lysine isopeptide (Lys-Gly) (interchain with G-Cter in SUMO1); alternate. A Glycyl lysine isopeptide (Lys-Gly) (interchain with G-Cter in SUMO2); alternate cross-link involves residue Lys1560. Positions Pro1601–Ser1628 match the UDR motif. Thr1606 carries the phosphothreonine modification. 3 positions are modified to phosphoserine: Ser1615, Ser1628, and Ser1632. The segment at Arg1624–Pro1715 is disordered. The segment covering Ser1631–Arg1648 has biased composition (low complexity). A phosphothreonine mark is found at Thr1635 and Thr1645. 3 positions are modified to phosphoserine: Ser1653, Ser1670, and Ser1675. Lys1682 is covalently cross-linked (Glycyl lysine isopeptide (Lys-Gly) (interchain with G-Cter in ubiquitin)). A phosphoserine mark is found at Ser1698 and Ser1756. 2 BRCT domains span residues Leu1749–Leu1845 and Pro1861–Lys1961.

As to quaternary structure, homoligomer. Interacts with p53/TP53 (via the central domain). Interacts with DCLRE1C. Interacts with histone H2AX and this requires phosphorylation of H2AX on 'Ser-139'. Interacts with histone H4 that has been dimethylated at 'Lys-20' (H4K20me2). Has low affinity for histone H4 containing monomethylated 'Lys-20' (H4K20me1). Does not bind histone H4 containing unmethylated or trimethylated 'Lys-20' (H4K20me3). Has low affinity for histone H3 that has been dimethylated on 'Lys-79'. Has very low affinity for histone H3 that has been monomethylated on 'Lys-79' (in vitro). Does not bind unmethylated histone H3. Interacts with histone H2A monoubiquitinated at 'Lys-15' (H2AK15Ub). Interacts with PWWP3A/EXPAND1. Interacts with CHEK2; modulates CHEK2 phosphorylation at 'Thr-68' in response to infrared. Interacts with MSL1; this interaction may be required for MSL1 DNA repair activity, but not for histone acetyltransferase activity. Interacts (when phosphorylated by ATM) with RIF1. Interacts (via the Tudor-like domain) with NUDT16L1/TIRR; interaction masks the Tudor-like domain and prevents recruitment to chromatin. Interacts with PAXIP1. Interacts with IFI202A. Interacts with SHLD2. Interacts (when phosphorylated) with TOPBP1. Interacts with GFI1; promoting methylation by PRMT1. Interacts with (phosphorylated) DYNLL1; specifically binds DYNLL1 phosphorylated at 'Ser-88' and promotes its recruitment to double stand breaks (DSBs). Phosphorylated at basal level in the absence of DNA damage. Phosphorylated by ATM in response to DNA damage: phosphorylation at different sites promotes interaction with different set of proteins: phosphorylation at the N-terminus by ATM (residues from 11-181) promotes interaction with PAXIP1 and non-homologous end joining (NHEJ) of dysfunctional telomeres. Phosphorylation by ATM at residues that are located more C-terminus (residues 300-650) leads to promote interaction with RIF1. Interaction with RIF1 leads to disrupt interaction with NUDT16L1/TIRR. Phosphorylation at Thr-1606 and Ser-1615 in the UDR motif blocks interaction with H2AK15ub. Dephosphorylated by PPP4C. Hyperphosphorylation during mitosis correlates with its exclusion from chromatin and DNA lesions. Hyperphosphorylated in an ATR-dependent manner in response to DNA damage induced by UV irradiation. Dephosphorylated by PPP5C. Phosphorylation at Ser-368 and Thr-662 promotes interaction with TOPBP1. Phosphorylated by VRK1. Post-translationally, asymmetrically dimethylated on Arg residues by PRMT1. Methylation is required for DNA binding. In terms of processing, monoubiquitinated at Lys-1682 by MSL2 is reponse to DNA damage, leading to its stabilization.

The protein resides in the nucleus. It localises to the chromosome. The protein localises to the centromere. It is found in the kinetochore. Its function is as follows. Double-strand break (DSB) repair protein involved in response to DNA damage, telomere dynamics and class-switch recombination (CSR) during antibody genesis. Plays a key role in the repair of double-strand DNA breaks (DSBs) in response to DNA damage by promoting non-homologous end joining (NHEJ)-mediated repair of DSBs and specifically counteracting the function of the homologous recombination (HR) repair protein BRCA1. In response to DSBs, phosphorylation by ATM promotes interaction with RIF1 and dissociation from NUDT16L1/TIRR, leading to recruitment to DSBs sites. Recruited to DSBs sites by recognizing and binding histone H2A monoubiquitinated at 'Lys-15' (H2AK15Ub) and histone H4 dimethylated at 'Lys-20' (H4K20me2), two histone marks that are present at DSBs sites. Required for immunoglobulin class-switch recombination (CSR) during antibody genesis, a process that involves the generation of DNA DSBs. Participates in the repair and the orientation of the broken DNA ends during CSR. In contrast, it is not required for classic NHEJ and V(D)J recombination. Promotes NHEJ of dysfunctional telomeres. The sequence is that of TP53-binding protein 1 from Mus musculus (Mouse).